Here is a 395-residue protein sequence, read N- to C-terminus: [LysW]-aminoadipate semialdehyde transaminase (395 aa).

Residues 113-114 (GT) and phenylalanine 140 each bind pyridoxal 5'-phosphate. Arginine 143 serves as a coordination point for substrate. Residue 225–228 (DEIQ) participates in pyridoxal 5'-phosphate binding. Lysine 254 is subject to N6-(pyridoxal phosphate)lysine. Threonine 282 is a binding site for substrate. Threonine 283 provides a ligand contact to pyridoxal 5'-phosphate.

The protein belongs to the class-III pyridoxal-phosphate-dependent aminotransferase family. LysJ subfamily. As to quaternary structure, homodimer. It depends on pyridoxal 5'-phosphate as a cofactor.

The protein resides in the cytoplasm. It carries out the reaction [amino-group carrier protein]-C-terminal-gamma-(L-lysyl)-L-glutamate + 2-oxoglutarate = [amino-group carrier protein]-C-terminal-N-(1-carboxy-5-oxopentan-1-yl)-L-glutamine + L-glutamate. The protein operates within amino-acid biosynthesis; L-lysine biosynthesis via AAA pathway; L-lysine from L-alpha-aminoadipate (Thermus route): step 4/5. Functionally, catalyzes the transfer of the amino group of L-glutamate to [LysW]-aminoadipate 6-semialdehyde, generating [LysW]-gamma-L-lysine. This chain is [LysW]-aminoadipate semialdehyde transaminase, found in Thermus thermophilus (strain ATCC 27634 / DSM 579 / HB8).